The sequence spans 374 residues: Serine/threonine-protein kinase-transforming protein mos (374 aa).

The 277-residue stretch at 94-370 (VCLMHRLGSG…LLQRDLKAFR (277 aa)) folds into the Protein kinase domain. ATP-binding positions include 100-108 (LGSGGFGSV) and Lys121. The active-site Proton acceptor is Asp229.

This sequence belongs to the protein kinase superfamily. Ser/Thr protein kinase family.

The enzyme catalyses L-seryl-[protein] + ATP = O-phospho-L-seryl-[protein] + ADP + H(+). The catalysed reaction is L-threonyl-[protein] + ATP = O-phospho-L-threonyl-[protein] + ADP + H(+). The sequence is that of Serine/threonine-protein kinase-transforming protein mos (V-MOS) from Mus musculus (Mouse).